The chain runs to 44 residues: Photosystem I reaction center subunit IX (44 aa).

Residues 7–27 (YLSTAPVLATLWFGSLAGLLI) traverse the membrane as a helical segment.

The protein belongs to the PsaJ family.

The protein localises to the plastid. It is found in the chloroplast thylakoid membrane. In terms of biological role, may help in the organization of the PsaE and PsaF subunits. This Calycanthus floridus var. glaucus (Eastern sweetshrub) protein is Photosystem I reaction center subunit IX.